The sequence spans 285 residues: Tyrosine recombinase XerA (285 aa).

One can recognise a Core-binding (CB) domain in the interval 7–84 (IVNSDILEEF…ALKSYFKFEG (78 aa)). The Tyr recombinase domain occupies 100–274 (SLPKSLTEDE…TTKHLREAIE (175 aa)). Active-site residues include Arg135, Lys160, His226, Arg229, and His252. Tyr261 functions as the O-(3'-phospho-DNA)-tyrosine intermediate in the catalytic mechanism.

It belongs to the 'phage' integrase family. XerA subfamily.

It is found in the cytoplasm. Its function is as follows. Site-specific tyrosine recombinase, which acts by catalyzing the cutting and rejoining of the recombining DNA molecules. This chain is Tyrosine recombinase XerA, found in Pyrococcus horikoshii (strain ATCC 700860 / DSM 12428 / JCM 9974 / NBRC 100139 / OT-3).